The sequence spans 599 residues: Pentatricopeptide repeat-containing protein At3g62470, mitochondrial (599 aa).

The transit peptide at 1 to 99 (MAAAPWLHLS…RGFSSGSSNV (99 aa)) directs the protein to the mitochondrion. 10 PPR repeats span residues 194–228 (DSRTYNSMMSILAKTRQFETMVSVLEEMGTKGLLT), 230–262 (ETFTIAMKAFAAAKERKKAVGIFELMKKYKFKI), 263–293 (GVETINCLLDSLGRAKLGKEAQVLFDKLKER), 297–331 (NMMTYTVLLNGWCRVRNLIEAARIWNDMIDQGLKP), 332–366 (DIVAHNVMLEGLLRSRKKSDAIKLFHVMKSKGPCP), 367–401 (NVRSYTIMIRDFCKQSSMETAIEYFDDMVDSGLQP), 402–436 (DAAVYTCLITGFGTQKKLDTVYELLKEMQEKGHPP), 437–471 (DGKTYNALIKLMANQKMPEHATRIYNKMIQNEIEP), 472–506 (SIHTFNMIMKSYFMARNYEMGRAVWEEMIKKGICP), and 507–541 (DDNSYTVLIRGLIGEGKSREACRYLEEMLDKGMKT).

This sequence belongs to the PPR family. P subfamily.

It localises to the mitochondrion. The polypeptide is Pentatricopeptide repeat-containing protein At3g62470, mitochondrial (Arabidopsis thaliana (Mouse-ear cress)).